The primary structure comprises 658 residues: MKLYCLSGHPTLPCNVLKFKSTTIMLDCGLDMTSTLNFLPLPLVQSPRLSNLPGWSLKDGNAFLDKELKECSGHVFVDSVPEFCLPETELIDLSTVDVILISNYHCMMALPYITEHTGFTGTVYATEPTMQIGRLLMEELVNFIERVPKAQSASLWKNKDIQRLLPSPLKDAVEVSTWRRCYTMQEVNSALSKIQLVGYSQKIELFGAVQVTPLSSGYALGSSNWIIQSHYEKVSYVSGSSLLTTHPQPMDQASLKNSDVLILTGLTQIPTANPDGMVGEFCSNLALTVRNGGNVLVPCYPSGVIYDLLECLYQYIDSAGLSNIPFYFISPVANSSLEFSQIFAEWLCHNKQSKVYLPEPPFPHAELIQTNKLKHYRSIHGDFSNDFRQPCVLFTGHPSLRFGDVVHFMELWGKSSLNTIIFTEPDFSYLEALAPYQPLAMKCIYCPIDTRLNFIQVSKLLKEVQPLHVVCPEQYTQPPPAQAHRMDLMIDCQPPAMSYRRAEVLALPFKRRYEKIEIMPELADSLVPMEIKPGISLATVSAVLHTKDNKHVLQPPPKPTQPTSSKKRKRVNEDIPDCKVLKPLLSGSIPVEQFVQTLEKHGFSDIKVEDTAKGHIVLLQEAETLIQIEEDSTHIICDNDETLRVRLRDLVLRFLQKF.

Residue lysine 58 forms a Glycyl lysine isopeptide (Lys-Gly) (interchain with G-Cter in SUMO2) linkage. A disordered region spans residues 548-572; that stretch reads DNKHVLQPPPKPTQPTSSKKRKRVN. The short motif at 566-570 is the Nuclear localization signal element; the sequence is KKRKR.

Belongs to the metallo-beta-lactamase superfamily. RNA-metabolizing metallo-beta-lactamase-like family. INTS9 subfamily. In terms of assembly, component of the Integrator complex, composed of core subunits INTS1, INTS2, INTS3, INTS4, INTS5, INTS6, INTS7, INTS8, INTS9/RC74, INTS10, INTS11/CPSF3L, INTS12, INTS13, INTS14 and INTS15. The core complex associates with protein phosphatase 2A subunits PPP2CA and PPP2R1A, to form the Integrator-PP2A (INTAC) complex. INTS9 is part of the RNA endonuclease subcomplex, composed of INTS4, INTS9, INTS11 and inositol hexakisphosphate (InsP6). Interacts with WDR73; interaction is required for the assembly of the RNA endonuclease subcomplex in the cytoplasm. Interacts with BRAT1; interaction is required for the assembly of the RNA endonuclease subcomplex. Interacts with ESRRB, ESRRB is not a core component of the Integrator complex and this association is a bridge for the interaction with the multiprotein complex Integrator; attracts the transcriptional machinery.

It is found in the nucleus. The protein localises to the cytoplasm. In terms of biological role, component of the integrator complex, a multiprotein complex that terminates RNA polymerase II (Pol II) transcription in the promoter-proximal region of genes. The integrator complex provides a quality checkpoint during transcription elongation by driving premature transcription termination of transcripts that are unfavorably configured for transcriptional elongation: the complex terminates transcription by (1) catalyzing dephosphorylation of the C-terminal domain (CTD) of Pol II subunit POLR2A/RPB1 and SUPT5H/SPT5, (2) degrading the exiting nascent RNA transcript via endonuclease activity and (3) promoting the release of Pol II from bound DNA. The integrator complex is also involved in terminating the synthesis of non-coding Pol II transcripts, such as enhancer RNAs (eRNAs), small nuclear RNAs (snRNAs), telomerase RNAs and long non-coding RNAs (lncRNAs). Mediates recruitment of cytoplasmic dynein to the nuclear envelope, probably as component of the integrator complex. In Mus musculus (Mouse), this protein is Integrator complex subunit 9 (Ints9).